A 295-amino-acid chain; its full sequence is Thioredoxin-related transmembrane protein 2 (295 aa).

The N-terminal stretch at 1-48 is a signal peptide; it reads MAVLAPLIALVYSVPRLSRWLARPYCLLSALLSIAFLLVRKLPPICNG. The Extracellular segment spans residues 49-102; that stretch reads LPTQREDGNPCDFDWREVEILMFLSAIVMMKNRRSITVEQHVGNIFMFSKVANA. A helical transmembrane segment spans residues 103–125; sequence ILFFRLDIRMGLLYLTLCIVFLM. A Thioredoxin domain is found at 114–269; it reads LLYLTLCIVF…LYQRAKKHSK (156 aa). At 126-295 the chain is on the cytoplasmic side; that stretch reads TCKPPLYMGP…VPDGENKKDK (170 aa). Residues S211 and S243 each carry the phosphoserine modification. Residues 266 to 295 form a disordered region; it reads KHSKGGDMSEEKPVDPAPTTVPDGENKKDK. Over residues 269–279 the composition is skewed to basic and acidic residues; it reads KGGDMSEEKPV. The Di-lysine motif signature appears at 292-295; it reads KKDK.

In terms of assembly, monomer. Homodimer; disulfide-linked. Occurs in both reduced and oxidized monomeric form. Oxidative conditions increase homodimerization. Interacts with CANX. Interacts with ATP2A2.

Its subcellular location is the endoplasmic reticulum membrane. It is found in the mitochondrion membrane. Its function is as follows. Endoplasmic reticulum and mitochondria-associated protein that probably functions as a regulator of cellular redox state and thereby regulates protein post-translational modification, protein folding and mitochondrial activity. Indirectly regulates neuronal proliferation, migration, and organization in the developing brain. The sequence is that of Thioredoxin-related transmembrane protein 2 (Tmx2) from Mus musculus (Mouse).